A 193-amino-acid chain; its full sequence is Xanthine phosphoribosyltransferase (193 aa).

Xanthine contacts are provided by L20 and T27. 128–132 (ANGQA) is a binding site for 5-phospho-alpha-D-ribose 1-diphosphate. Position 156 (K156) interacts with xanthine.

It belongs to the purine/pyrimidine phosphoribosyltransferase family. Xpt subfamily. Homodimer.

Its subcellular location is the cytoplasm. The catalysed reaction is XMP + diphosphate = xanthine + 5-phospho-alpha-D-ribose 1-diphosphate. It participates in purine metabolism; XMP biosynthesis via salvage pathway; XMP from xanthine: step 1/1. Converts the preformed base xanthine, a product of nucleic acid breakdown, to xanthosine 5'-monophosphate (XMP), so it can be reused for RNA or DNA synthesis. This is Xanthine phosphoribosyltransferase from Streptococcus pyogenes serotype M3 (strain ATCC BAA-595 / MGAS315).